Consider the following 255-residue polypeptide: Small ribosomal subunit protein uS2 (255 aa).

Residues 230 to 255 (QSSSGRDLGASSEVPVEPALEEAAEG) form a disordered region.

This sequence belongs to the universal ribosomal protein uS2 family.

This Rhizobium etli (strain CIAT 652) protein is Small ribosomal subunit protein uS2.